Here is a 57-residue protein sequence, read N- to C-terminus: uncharacterized protein (57 aa).

Transmembrane regions (helical) follow at residues 2–22 (LLVVIFGLVALFALWGVLRSV) and 29–49 (GFLLAGATLFVFGWFTVMTVI).

Its subcellular location is the cell membrane. This is an uncharacterized protein from Bacillus subtilis (strain 168).